The primary structure comprises 124 residues: KETAAAKFERQHMDSSTSSASSSNYCNQMMKSRDMTKDRCKPVNTFVHZSLABVZAVCSZKBVACKBGZTBCYZSYSTMSITBCRZTGSSKYPBCAYKTTZAZKHIIVACZGBPYVPVHFBASV.

The span at 1–13 (KETAAAKFERQHM) shows a compositional bias: basic and acidic residues. The disordered stretch occupies residues 1-25 (KETAAAKFERQHMDSSTSSASSSNY). Substrate is bound by residues lysine 7 and arginine 10. The active-site Proton acceptor is the histidine 12. Cystine bridges form between cysteine 26/cysteine 84, cysteine 40/cysteine 95, cysteine 58/cysteine 110, and cysteine 65/cysteine 72. Residues 41–45 (KPVNT), lysine 66, and arginine 85 contribute to the substrate site. The Proton donor role is filled by histidine 119.

The protein belongs to the pancreatic ribonuclease family. As to quaternary structure, monomer. Interacts with and forms tight 1:1 complexes with RNH1. Dimerization of two such complexes may occur. Interaction with RNH1 inhibits this protein. As to expression, pancreas.

It localises to the secreted. The enzyme catalyses an [RNA] containing cytidine + H2O = an [RNA]-3'-cytidine-3'-phosphate + a 5'-hydroxy-ribonucleotide-3'-[RNA].. The catalysed reaction is an [RNA] containing uridine + H2O = an [RNA]-3'-uridine-3'-phosphate + a 5'-hydroxy-ribonucleotide-3'-[RNA].. In terms of biological role, endonuclease that catalyzes the cleavage of RNA on the 3' side of pyrimidine nucleotides. Acts on single-stranded and double-stranded RNA. The sequence is that of Ribonuclease pancreatic (RNASE1) from Tragelaphus oryx (Eland).